Reading from the N-terminus, the 227-residue chain is MEKLFNENEGMPSNQGKIDNEEQPPHEGKPEVACILEDKKLENEGNTENTGKRVEEPLKDKEKPESAGKAKGEGKSERKGKSEMQGGSKTEGKPERGGRAEGEGEPDSEREPESEGEPESETRAAGKRPAEDDIPRKAKRKTNKGLAQYLKQYKEAIHDMNFSNEDMIREFDNMARVEDKRRKSKQKLGAFLWMQRNLQDPFYPRGPREFRGGCRAPRRDTEDIPYV.

2 disordered regions span residues 1 to 145 (MEKL…TNKG) and 202 to 227 (FYPR…IPYV). Composition is skewed to basic and acidic residues over residues 18–43 (IDNE…KLEN), 50–82 (TGKR…KGKS), 90–113 (TEGK…REPE), 120–136 (SETR…DIPR), and 206–227 (GPRE…IPYV).

This sequence belongs to the TFS-II family. TFA subfamily.

The protein resides in the nucleus. In terms of biological role, may be involved in transcriptional regulation. The sequence is that of Transcription elongation factor A protein-like 2 (TCEAL2) from Homo sapiens (Human).